Here is a 34-residue protein sequence, read N- to C-terminus: Toxin GTx1-15 (34 aa).

Cystine bridges form between Cys2–Cys17, Cys9–Cys23, and Cys16–Cys30. Phe34 carries the post-translational modification Phenylalanine amide.

Belongs to the neurotoxin 10 (Hwtx-1) family. 08 (Gtx1-15) subfamily. As to expression, expressed by the venom gland.

It localises to the secreted. Its function is as follows. Potent voltage-gated sodium channel blocker. Potently inhibits the voltage-gated sodium channels Nav1.7/SCN9A (IC(50)=0.58-10 nM). Also shows a moderate activity on Nav1.1/SCN1A (IC(50)=6 nM), Nav1.2/SCN2A (IC(50)=5-128 nM), Nav1.3/SCN3A (IC(50)=20.3-170 nM), and Nav1.6/SCN8A (IC(50)=17-20.1 nM). Shows an unclear inhibition of Nav1.4/SCN4A (IC(50)=200 nM to &gt;10 uM), Nav1.5/SCN5A (IC(50)=140 nM to &gt;10 uM) and Nav1.8/SCN10A (IC(50)=68-12200 nM). Weakly blocks the low voltage-gated calcium channels Cav3.1/CACNA1G (30% inhibition of the peak current at 9.8 nM). shows moderate affinity for lipid bilayers. In vivo, when tested on the OD1-induced mouse model of Nav1.7/SCN9A-mediated pain, the toxin is effective when co-administered with OD1, but lacks efficacy when delivered systemically. The protein is Toxin GTx1-15 of Grammostola porteri (Tarantula spider).